Reading from the N-terminus, the 323-residue chain is Lipoyl synthase (323 aa).

[4Fe-4S] cluster is bound by residues C56, C61, C67, C82, C86, C89, and S293. One can recognise a Radical SAM core domain in the interval 68–282 (WEDREATFLI…AAEARELGFA (215 aa)).

It belongs to the radical SAM superfamily. Lipoyl synthase family. It depends on [4Fe-4S] cluster as a cofactor.

It localises to the cytoplasm. The catalysed reaction is [[Fe-S] cluster scaffold protein carrying a second [4Fe-4S](2+) cluster] + N(6)-octanoyl-L-lysyl-[protein] + 2 oxidized [2Fe-2S]-[ferredoxin] + 2 S-adenosyl-L-methionine + 4 H(+) = [[Fe-S] cluster scaffold protein] + N(6)-[(R)-dihydrolipoyl]-L-lysyl-[protein] + 4 Fe(3+) + 2 hydrogen sulfide + 2 5'-deoxyadenosine + 2 L-methionine + 2 reduced [2Fe-2S]-[ferredoxin]. Its pathway is protein modification; protein lipoylation via endogenous pathway; protein N(6)-(lipoyl)lysine from octanoyl-[acyl-carrier-protein]: step 2/2. Catalyzes the radical-mediated insertion of two sulfur atoms into the C-6 and C-8 positions of the octanoyl moiety bound to the lipoyl domains of lipoate-dependent enzymes, thereby converting the octanoylated domains into lipoylated derivatives. The chain is Lipoyl synthase from Acidothermus cellulolyticus (strain ATCC 43068 / DSM 8971 / 11B).